The chain runs to 137 residues: Protein shisa-5 (137 aa).

Residues phenylalanine 3–isoleucine 23 form a helical membrane-spanning segment.

It belongs to the shisa family. In terms of assembly, interacts with PDCD6; PDCD6 can stabilize SHISA5.

The protein resides in the endoplasmic reticulum membrane. It is found in the nucleus membrane. In terms of biological role, can induce apoptosis in a caspase-dependent manner and plays a role in p53/TP53-dependent apoptosis. The chain is Protein shisa-5 (SHISA5) from Pongo abelii (Sumatran orangutan).